A 435-amino-acid chain; its full sequence is tRNA modification GTPase MnmE (435 aa).

(6S)-5-formyl-5,6,7,8-tetrahydrofolate contacts are provided by R24, E82, and K122. A TrmE-type G domain is found at 219–360 (GFIIAIAGPP…LIAEMERRLG (142 aa)). N229 lines the K(+) pocket. Residues 229-234 (NAGKST), 248-254 (SPVPGTT), and 273-276 (DTAG) each bind GTP. S233 contacts Mg(2+). 3 residues coordinate K(+): S248, V250, and T253. T254 is a Mg(2+) binding site. K435 provides a ligand contact to (6S)-5-formyl-5,6,7,8-tetrahydrofolate.

It belongs to the TRAFAC class TrmE-Era-EngA-EngB-Septin-like GTPase superfamily. TrmE GTPase family. Homodimer. Heterotetramer of two MnmE and two MnmG subunits. K(+) is required as a cofactor.

Its subcellular location is the cytoplasm. Its function is as follows. Exhibits a very high intrinsic GTPase hydrolysis rate. Involved in the addition of a carboxymethylaminomethyl (cmnm) group at the wobble position (U34) of certain tRNAs, forming tRNA-cmnm(5)s(2)U34. This chain is tRNA modification GTPase MnmE, found in Azorhizobium caulinodans (strain ATCC 43989 / DSM 5975 / JCM 20966 / LMG 6465 / NBRC 14845 / NCIMB 13405 / ORS 571).